The chain runs to 1176 residues: MENNIQNQCVPYNCLSNPEEILLDGERISTGNSSIDISLSLVQLLVSNFVPGGGFLVGLLDFVWGIVGPSPWDAFLVQIEQLINERIAAYARSAAISNLEGLGNNFNIYVEAFKEWEADPDNPVTRTRVVDRFRILDGLLERDIPSFRIAGFEVPLLSVYAQAANLHLAILRDSSIFGARWGLTTINVNENYNRLIRHIDEYANHCADTYNRGLNNLPKSTYQDWITYNRLRRDLTLTVLDIAAFFPSYDNRRYPIQSVGQLTREIYTDPLITFNPQLQSVAQLPTFNVMESNAIRTPHLFDVLNNLTIFTDWFSVGRNFYWGGHRVISNRIGGGNITSPIYGREANQEPPRSFTFNGPVFRTLSNPTFRPLQQPWPAPPFNLRGVEGVEFSTPLNSFTYRGRGTVDSLTELPPEDNSVPPREGYSHRLCHATFVQRSGTPFLTTGPVFSWTHRSATDRNIIYPDVINQIPLVKAFNLTSGTSVVRGPGFTGGDIIRTNVNGSVLSMSLNFSNTTLQRYRVRVRYAASQTMVMSVTVGGSTTGNQGFPSTMSANGALTSQSFRFAEFPVGISASGSQGASISISNNVGRQMFHLDRIEFLPVTSTFEEEYDLERAQEAVNALFTSTNQLGLKTDVTDYHIDQVSNLVECLSDEFCLDEKRELSEKVKHAKRLSDERNLLQDRNFRSINGQLDRGWRGSTDITIQGGDDVFKENYVTLPGTFDECYPTYLYQKIDESKLKSYTRYELRGYIEDSQDLEIYLIRYNAKHEIVNVPGTGSLWPLSIENSIGPCGEPNRCAPHLEWNPNLDCSCRDGEKCAHHSHHFSLDIDVGCTDLNEDLGVWVIFKIKTQDGHARLGNLEFLEEKPLLGEALARVKRAEKKWRDKREKLEWETNIVYKEAKESVDALFVNSQYDRLQADTNIAMIHAADKRVHRIREAYLPELSVIPGVNAGIFEELEGRIFTAYSLYDARNVIKNGDFNNGLLCWNLKGHVDVEEQNNHRSVLVVPEWEAEVSQEVRVCPGRGYILRVTAYKEGYGEGCVTIHEIEDNTDELKFSNCVEEEVYPNNTVTCNDYTATQEEYGGAYTSRNHGYGKSYESNSSVQADYASVYEEKADTDGRRDNHCESNRGYGDYTPLPAGYVTKELEYFPETDKVWVEIGETEGTFIVDSVELLLMEE.

This sequence belongs to the delta endotoxin family.

Promotes colloidosmotic lysis by binding to the midgut epithelial cells of insects. Toxic to Spodoptera exigua and Trichoplusia ni. The sequence is that of Pesticidal crystal protein Cry1Cb (cry1Cb) from Bacillus thuringiensis subsp. galleriae.